The chain runs to 292 residues: Phosphatidylglycerol--prolipoprotein diacylglyceryl transferase (292 aa).

4 consecutive transmembrane segments (helical) span residues 24-44 (ISVHWYGIMYVSAMLIALLIA), 65-85 (FFIWVEIGVILGGRIGYVLIY), 110-130 (GISGFSYHGAMAGFVLAAIIF), and 136-156 (QSFWIFMDLSAISIPLGYVFG). Arginine 157 contacts a 1,2-diacyl-sn-glycero-3-phospho-(1'-sn-glycerol). 3 helical membrane passes run 192–212 (SQLFEAFAEGIIVFILLICLL), 219–239 (GTLLVAYGVFYALARFVCEYF), and 256–276 (GQILSLVMLVISIFLGLFVFV).

Belongs to the Lgt family.

The protein resides in the cell inner membrane. The catalysed reaction is L-cysteinyl-[prolipoprotein] + a 1,2-diacyl-sn-glycero-3-phospho-(1'-sn-glycerol) = an S-1,2-diacyl-sn-glyceryl-L-cysteinyl-[prolipoprotein] + sn-glycerol 1-phosphate + H(+). It participates in protein modification; lipoprotein biosynthesis (diacylglyceryl transfer). Functionally, catalyzes the transfer of the diacylglyceryl group from phosphatidylglycerol to the sulfhydryl group of the N-terminal cysteine of a prolipoprotein, the first step in the formation of mature lipoproteins. This chain is Phosphatidylglycerol--prolipoprotein diacylglyceryl transferase, found in Helicobacter hepaticus (strain ATCC 51449 / 3B1).